The following is a 574-amino-acid chain: Urease subunit alpha (574 aa).

The Urease domain maps to 131–574 (GAIDSHIHFI…LPMAQRYLLL (444 aa)). Residues His136, His138, and Lys219 each coordinate Ni(2+). Lys219 is modified (N6-carboxylysine). His221 contributes to the substrate binding site. Residues His248 and His274 each coordinate Ni(2+). His322 acts as the Proton donor in catalysis. Residue Asp362 participates in Ni(2+) binding. The tract at residues 384-403 (KVQRGPLPEDAANPRGSRND) is disordered.

It belongs to the metallo-dependent hydrolases superfamily. Urease alpha subunit family. As to quaternary structure, heterotrimer of UreA (gamma), UreB (beta) and UreC (alpha) subunits. Three heterotrimers associate to form the active enzyme. Ni cation serves as cofactor. Post-translationally, carboxylation allows a single lysine to coordinate two nickel ions.

The protein localises to the cytoplasm. It catalyses the reaction urea + 2 H2O + H(+) = hydrogencarbonate + 2 NH4(+). Its pathway is nitrogen metabolism; urea degradation; CO(2) and NH(3) from urea (urease route): step 1/1. The protein is Urease subunit alpha of Prochlorococcus marinus (strain MIT 9313).